The sequence spans 172 residues: MVINFEELHPNERAELERNIFFSTLEQLKGWARSNSLWPMTFGLACCAIEMMGVGSSHYDLDRFGSFFRTSPRQSDVMIVSGTVTKKMAPIVRRLYDQMPEPKWVIAMGSCATAGGPYVNSYAVVKGVDQIVPVDVYIPGCPPNPAALIYGINKLKEKIRYEAKTGKQVTNK.

4 residues coordinate [4Fe-4S] cluster: Cys46, Cys47, Cys111, and Cys141.

The protein belongs to the complex I 20 kDa subunit family. NDH-1 is composed of 14 different subunits. Subunits NuoB, C, D, E, F, and G constitute the peripheral sector of the complex. [4Fe-4S] cluster is required as a cofactor.

The protein resides in the cell membrane. The enzyme catalyses a quinone + NADH + 5 H(+)(in) = a quinol + NAD(+) + 4 H(+)(out). In terms of biological role, NDH-1 shuttles electrons from NADH, via FMN and iron-sulfur (Fe-S) centers, to quinones in the respiratory chain. The immediate electron acceptor for the enzyme in this species is believed to be a menaquinone. Couples the redox reaction to proton translocation (for every two electrons transferred, four hydrogen ions are translocated across the cytoplasmic membrane), and thus conserves the redox energy in a proton gradient. The sequence is that of NADH-quinone oxidoreductase subunit B from Bacillus anthracis (strain A0248).